Consider the following 186-residue polypeptide: Shikimate kinase (186 aa).

15-20 lines the ATP pocket; the sequence is GAGKTT. A Mg(2+)-binding site is contributed by threonine 19. 3 residues coordinate substrate: aspartate 37, arginine 61, and glycine 83. Arginine 121 is a binding site for ATP. Residue arginine 140 coordinates substrate.

It belongs to the shikimate kinase family. In terms of assembly, monomer. Requires Mg(2+) as cofactor.

The protein resides in the cytoplasm. The catalysed reaction is shikimate + ATP = 3-phosphoshikimate + ADP + H(+). Its pathway is metabolic intermediate biosynthesis; chorismate biosynthesis; chorismate from D-erythrose 4-phosphate and phosphoenolpyruvate: step 5/7. Catalyzes the specific phosphorylation of the 3-hydroxyl group of shikimic acid using ATP as a cosubstrate. This chain is Shikimate kinase, found in Psychrobacter cryohalolentis (strain ATCC BAA-1226 / DSM 17306 / VKM B-2378 / K5).